Reading from the N-terminus, the 215-residue chain is Large ribosomal subunit protein uL16 (215 aa).

Residues 1-22 (MGRRPARCYRQPKGKPYPKSRY) are disordered.

This sequence belongs to the universal ribosomal protein uL16 family.

The chain is Large ribosomal subunit protein uL16 (RPL10) from Tetrahymena thermophila (strain SB210).